A 219-amino-acid polypeptide reads, in one-letter code: Uracil-DNA glycosylase (219 aa).

Asp-62 (proton acceptor) is an active-site residue.

The protein belongs to the uracil-DNA glycosylase (UDG) superfamily. UNG family.

It is found in the cytoplasm. The enzyme catalyses Hydrolyzes single-stranded DNA or mismatched double-stranded DNA and polynucleotides, releasing free uracil.. Functionally, excises uracil residues from the DNA which can arise as a result of misincorporation of dUMP residues by DNA polymerase or due to deamination of cytosine. The protein is Uracil-DNA glycosylase of Lactococcus lactis subsp. cremoris (strain MG1363).